Reading from the N-terminus, the 286-residue chain is Transcriptional regulator of yeast form adherence 4 (286 aa).

2 stretches are compositionally biased toward low complexity: residues 1–29 (MSLPMSPVSPINTTTSTSTTTTPLSPPSS) and 37–65 (LSTSISNNSITSDSSLDSNTSTSSTTTTN). The interval 1-71 (MSLPMSPVSP…TTTNYGTKTP (71 aa)) is disordered. C2H2-type zinc fingers lie at residues 78–101 (FNCTLCQRAFTREEHLTRHTLSTH) and 107–130 (FTCGICSRPFSRRDLLLRHAKNLH). The tract at residues 146-260 (HCNKDNDSKS…ITNSSTSHIH (115 aa)) is disordered. Composition is skewed to low complexity over residues 156-165 (GSDSNTNKTN) and 228-244 (SVPSTTTTSTTTVPTST). Polar residues predominate over residues 245–260 (NNDTASITNSSTSHIH).

The protein resides in the nucleus. In terms of biological role, transcription factor required for yeast cell adherence to silicone substrate. In Candida albicans (strain SC5314 / ATCC MYA-2876) (Yeast), this protein is Transcriptional regulator of yeast form adherence 4 (TRY4).